Consider the following 300-residue polypeptide: Recombination-associated protein RdgC (300 aa).

Belongs to the RdgC family.

The protein localises to the cytoplasm. The protein resides in the nucleoid. Its function is as follows. May be involved in recombination. The sequence is that of Recombination-associated protein RdgC from Janthinobacterium sp. (strain Marseille) (Minibacterium massiliensis).